Consider the following 408-residue polypeptide: Phosphopentomutase (408 aa).

The Mn(2+) site is built by Asp-10, Asp-307, His-312, Asp-348, His-349, and His-360.

This sequence belongs to the phosphopentomutase family. Mn(2+) serves as cofactor.

The protein localises to the cytoplasm. It carries out the reaction 2-deoxy-alpha-D-ribose 1-phosphate = 2-deoxy-D-ribose 5-phosphate. It catalyses the reaction alpha-D-ribose 1-phosphate = D-ribose 5-phosphate. It functions in the pathway carbohydrate degradation; 2-deoxy-D-ribose 1-phosphate degradation; D-glyceraldehyde 3-phosphate and acetaldehyde from 2-deoxy-alpha-D-ribose 1-phosphate: step 1/2. Its function is as follows. Isomerase that catalyzes the conversion of deoxy-ribose 1-phosphate (dRib-1-P) and ribose 1-phosphate (Rib-1-P) to deoxy-ribose 5-phosphate (dRib-5-P) and ribose 5-phosphate (Rib-5-P), respectively. The polypeptide is Phosphopentomutase (Proteus mirabilis (strain HI4320)).